A 122-amino-acid chain; its full sequence is MVLGFLVRGGLVAATVYYTQKVGIWGDSDQTDKLYNDIKSELRPHVQKLEKQLPFEVPQLPKTGEMRFLAKHYYNEGVKNTFRFIHMLPCYAGRGLKKVKDTFQDFAQSPAIAGGAESSPPK.

Residues 9 to 25 form a helical membrane-spanning segment; sequence GGLVAATVYYTQKVGIW.

Belongs to the MICOS complex subunit Mic13 family. Component of the mitochondrial contact site and cristae organizing system (MICOS) complex.

It localises to the mitochondrion inner membrane. In terms of biological role, component of the MICOS complex, a large protein complex of the mitochondrial inner membrane that plays crucial roles in the maintenance of crista junctions, inner membrane architecture, and formation of contact sites to the outer membrane. In Drosophila melanogaster (Fruit fly), this protein is MICOS complex subunit MIC13 homolog QIL1.